Here is a 438-residue protein sequence, read N- to C-terminus: V-type ATP synthase beta chain (438 aa).

The protein belongs to the ATPase alpha/beta chains family.

Its function is as follows. Produces ATP from ADP in the presence of a proton gradient across the membrane. The V-type beta chain is a regulatory subunit. The chain is V-type ATP synthase beta chain (atpB) from Chlamydia muridarum (strain MoPn / Nigg).